The chain runs to 477 residues: ATP synthase subunit beta (477 aa).

An ATP-binding site is contributed by 148-155 (GGAGVGKT).

Belongs to the ATPase alpha/beta chains family. F-type ATPases have 2 components, CF(1) - the catalytic core - and CF(0) - the membrane proton channel. CF(1) has five subunits: alpha(3), beta(3), gamma(1), delta(1), epsilon(1). CF(0) has three main subunits: a(1), b(2) and c(9-12). The alpha and beta chains form an alternating ring which encloses part of the gamma chain. CF(1) is attached to CF(0) by a central stalk formed by the gamma and epsilon chains, while a peripheral stalk is formed by the delta and b chains.

Its subcellular location is the cell inner membrane. The catalysed reaction is ATP + H2O + 4 H(+)(in) = ADP + phosphate + 5 H(+)(out). In terms of biological role, produces ATP from ADP in the presence of a proton gradient across the membrane. The catalytic sites are hosted primarily by the beta subunits. This is ATP synthase subunit beta from Psychrobacter cryohalolentis (strain ATCC BAA-1226 / DSM 17306 / VKM B-2378 / K5).